Consider the following 2281-residue polypeptide: Protein Ycf2 (2281 aa).

ATP is bound at residue 1635 to 1642 (GSIGSGRS).

This sequence belongs to the Ycf2 family.

The protein resides in the plastid. It is found in the chloroplast stroma. Functionally, probable ATPase of unknown function. Its presence in a non-photosynthetic plant (Epifagus virginiana) and experiments in tobacco indicate that it has an essential function which is probably not related to photosynthesis. The polypeptide is Protein Ycf2 (Coffea arabica (Arabian coffee)).